A 515-amino-acid chain; its full sequence is 2-isopropylmalate synthase (515 aa).

The Pyruvate carboxyltransferase domain maps to Val-5 to His-267. The Mn(2+) site is built by Asp-14, His-202, His-204, and Asn-238. The tract at residues Val-392 to His-515 is regulatory domain.

This sequence belongs to the alpha-IPM synthase/homocitrate synthase family. LeuA type 1 subfamily. In terms of assembly, homodimer. Requires Mn(2+) as cofactor.

It is found in the cytoplasm. It carries out the reaction 3-methyl-2-oxobutanoate + acetyl-CoA + H2O = (2S)-2-isopropylmalate + CoA + H(+). The protein operates within amino-acid biosynthesis; L-leucine biosynthesis; L-leucine from 3-methyl-2-oxobutanoate: step 1/4. Functionally, catalyzes the condensation of the acetyl group of acetyl-CoA with 3-methyl-2-oxobutanoate (2-ketoisovalerate) to form 3-carboxy-3-hydroxy-4-methylpentanoate (2-isopropylmalate). The protein is 2-isopropylmalate synthase of Haemophilus influenzae (strain ATCC 51907 / DSM 11121 / KW20 / Rd).